Reading from the N-terminus, the 227-residue chain is Protein CAP22 (227 aa).

2 N-linked (GlcNAc...) asparagine glycosylation sites follow: asparagine 55 and asparagine 72. Residues 143–162 (TTIGGGATPAPTSERSRTSD) are disordered.

Its subcellular location is the secreted. The protein localises to the cell wall. The chain is Protein CAP22 (CAP22) from Colletotrichum gloeosporioides (Anthracnose fungus).